The chain runs to 189 residues: UPF0251 protein MTH_1178 (189 aa).

It belongs to the UPF0251 family.

This chain is UPF0251 protein MTH_1178, found in Methanothermobacter thermautotrophicus (strain ATCC 29096 / DSM 1053 / JCM 10044 / NBRC 100330 / Delta H) (Methanobacterium thermoautotrophicum).